The primary structure comprises 532 residues: MKTPTKYFIIFILLAALAVFVSEATSKVGQQTTTTTQQVKCSGLQCTLNKLIVAVGKFTIKQILVGIVIVLATIALHQQYVITQKKGSLPGPSFVPPFFGMLFQLIFTPFSFYEKQEKYGPISWTSIMNKFVLFVTDAEINRQVFKEENAKLYLSLGAKKILTEKAIPFIEGAPHRQLRKQLLPLFTIRALSSYLPIQESIVDEHIAMWIKNGKADINARNNCRDLNMAISTGVFVGNNTPESVRDDIAKNFFVMNEGFLCLPIDLPGTTLRKAINARVRLVEIFTDIIAKSRKRMGDGEKPQSLIDLWVEHFLNCPEEERDELSNDTIIFTLLSFMFASQDALTSSLVWTVQLMAEHPDILAKVRAEQASLRPNNEKLDLDTMRQATYTRMVVSEILRFRPPAVMVPHENIEDIVIGDNVHVPKGTMILPSIWSAHFQEGGYSDPYKFDPQRFDSVRKEDVTCAKNSLVFGAGPHFCIGKELAKNQIEVFLTKLAMSTEWTHNKTPGGDEIIFGPTIFPKDGCNITIKARN.

The chain crosses the membrane as a helical span at residues 8-28 (FIIFILLAALAVFVSEATSKV). Residue Cys478 participates in heme binding.

The protein belongs to the cytochrome P450 family. Heme is required as a cofactor.

The protein localises to the membrane. The sequence is that of Probable cytochrome P450 524A1 (cyp524A1) from Dictyostelium discoideum (Social amoeba).